The following is a 198-amino-acid chain: Glycerol-3-phosphate acyltransferase (198 aa).

A run of 5 helical transmembrane segments spans residues 6–26, 56–78, 83–101, 113–133, and 155–175; these read FLPV…GLVL, LAAG…AGYI, AAMA…PVWL, IGIL…LWLA, and FLWW…TLLL.

It belongs to the PlsY family. In terms of assembly, probably interacts with PlsX.

The protein localises to the cell inner membrane. The catalysed reaction is an acyl phosphate + sn-glycerol 3-phosphate = a 1-acyl-sn-glycero-3-phosphate + phosphate. It functions in the pathway lipid metabolism; phospholipid metabolism. Its function is as follows. Catalyzes the transfer of an acyl group from acyl-phosphate (acyl-PO(4)) to glycerol-3-phosphate (G3P) to form lysophosphatidic acid (LPA). This enzyme utilizes acyl-phosphate as fatty acyl donor, but not acyl-CoA or acyl-ACP. The sequence is that of Glycerol-3-phosphate acyltransferase from Bradyrhizobium diazoefficiens (strain JCM 10833 / BCRC 13528 / IAM 13628 / NBRC 14792 / USDA 110).